We begin with the raw amino-acid sequence, 314 residues long: Methenyltetrahydromethanopterin cyclohydrolase (314 aa).

The protein belongs to the MCH family.

The protein localises to the cytoplasm. The enzyme catalyses 5,10-methenyl-5,6,7,8-tetrahydromethanopterin + H2O = N(5)-formyl-5,6,7,8-tetrahydromethanopterin + H(+). It participates in one-carbon metabolism; methanogenesis from CO(2); 5,10-methenyl-5,6,7,8-tetrahydromethanopterin from CO(2): step 3/3. Functionally, catalyzes the reversible interconversion of 5-formyl-H(4)MPT to methenyl-H(4)MPT(+). This is Methenyltetrahydromethanopterin cyclohydrolase from Methanocorpusculum labreanum (strain ATCC 43576 / DSM 4855 / Z).